The following is a 28-amino-acid chain: U1-poneritoxin-Da4a (28 aa).

Alanine 28 bears the Alanine amide mark.

As to expression, expressed by the venom gland.

The protein localises to the secreted. In terms of biological role, shows a broad spectrum of activity against both Gram-positive and Gram-negative bacteria. Also has antimicrobial activity against S.cerevisiae. Has insecticidal and non-hemolytic activity. In Dinoponera australis (Giant neotropical hunting ant), this protein is U1-poneritoxin-Da4a.